A 392-amino-acid polypeptide reads, in one-letter code: Dual-specificity RNA methyltransferase RlmN (392 aa).

Glu-115 (proton acceptor) is an active-site residue. One can recognise a Radical SAM core domain in the interval 121–358; that stretch reads EVDRGTLCIS…YKAGYASPIR (238 aa). Cys-128 and Cys-369 are oxidised to a cystine. [4Fe-4S] cluster contacts are provided by Cys-135, Cys-139, and Cys-142. S-adenosyl-L-methionine-binding positions include 195 to 196, Ser-227, 249 to 251, and Asn-326; these read GE and SFH. Cys-369 functions as the S-methylcysteine intermediate in the catalytic mechanism.

The protein belongs to the radical SAM superfamily. RlmN family. [4Fe-4S] cluster serves as cofactor.

The protein resides in the cytoplasm. It catalyses the reaction adenosine(2503) in 23S rRNA + 2 reduced [2Fe-2S]-[ferredoxin] + 2 S-adenosyl-L-methionine = 2-methyladenosine(2503) in 23S rRNA + 5'-deoxyadenosine + L-methionine + 2 oxidized [2Fe-2S]-[ferredoxin] + S-adenosyl-L-homocysteine. It carries out the reaction adenosine(37) in tRNA + 2 reduced [2Fe-2S]-[ferredoxin] + 2 S-adenosyl-L-methionine = 2-methyladenosine(37) in tRNA + 5'-deoxyadenosine + L-methionine + 2 oxidized [2Fe-2S]-[ferredoxin] + S-adenosyl-L-homocysteine. Its function is as follows. Specifically methylates position 2 of adenine 2503 in 23S rRNA and position 2 of adenine 37 in tRNAs. m2A2503 modification seems to play a crucial role in the proofreading step occurring at the peptidyl transferase center and thus would serve to optimize ribosomal fidelity. This Jannaschia sp. (strain CCS1) protein is Dual-specificity RNA methyltransferase RlmN.